We begin with the raw amino-acid sequence, 340 residues long: Putative inactive cytochrome P450 family member 4Z2 (340 aa).

Residues Met-1–Leu-9 lie on the Cytoplasmic side of the membrane. Residues Met-10–Ile-30 form a helical; Signal-anchor for type II membrane protein membrane-spanning segment. Over Arg-31 to Cys-340 the chain is Lumenal.

This sequence belongs to the cytochrome P450 family. Heme serves as cofactor. Detected at low levels in mammary gland and mammary carcinoma.

The protein resides in the membrane. In Homo sapiens (Human), this protein is Putative inactive cytochrome P450 family member 4Z2 (CYP4Z2P).